A 434-amino-acid polypeptide reads, in one-letter code: Glutamyl-tRNA reductase (434 aa).

Residues 49–52 (TCNR), Ser109, 114–116 (EPQ), and Gln120 each bind substrate. Cys50 acts as the Nucleophile in catalysis. An NADP(+)-binding site is contributed by 189 to 194 (GAGEMC).

It belongs to the glutamyl-tRNA reductase family. Homodimer.

The catalysed reaction is (S)-4-amino-5-oxopentanoate + tRNA(Glu) + NADP(+) = L-glutamyl-tRNA(Glu) + NADPH + H(+). It functions in the pathway porphyrin-containing compound metabolism; protoporphyrin-IX biosynthesis; 5-aminolevulinate from L-glutamyl-tRNA(Glu): step 1/2. Functionally, catalyzes the NADPH-dependent reduction of glutamyl-tRNA(Glu) to glutamate 1-semialdehyde (GSA). The chain is Glutamyl-tRNA reductase from Geobacter metallireducens (strain ATCC 53774 / DSM 7210 / GS-15).